A 382-amino-acid polypeptide reads, in one-letter code: ATP phosphoribosyltransferase regulatory subunit (382 aa).

This sequence belongs to the class-II aminoacyl-tRNA synthetase family. HisZ subfamily. In terms of assembly, heteromultimer composed of HisG and HisZ subunits.

Its subcellular location is the cytoplasm. It functions in the pathway amino-acid biosynthesis; L-histidine biosynthesis; L-histidine from 5-phospho-alpha-D-ribose 1-diphosphate: step 1/9. Its function is as follows. Required for the first step of histidine biosynthesis. May allow the feedback regulation of ATP phosphoribosyltransferase activity by histidine. This Burkholderia ambifaria (strain ATCC BAA-244 / DSM 16087 / CCUG 44356 / LMG 19182 / AMMD) (Burkholderia cepacia (strain AMMD)) protein is ATP phosphoribosyltransferase regulatory subunit.